A 364-amino-acid polypeptide reads, in one-letter code: Pre-small/secreted glycoprotein (364 aa).

The first 32 residues, methionine 1–serine 32, serve as a signal peptide directing secretion. Asparagine 40 is a glycosylation site (N-linked (GlcNAc...) asparagine; by host). 2 disulfides stabilise this stretch: cysteine 108–cysteine 135 and cysteine 121–cysteine 147. Residues asparagine 204, asparagine 228, asparagine 238, asparagine 257, and asparagine 268 are each glycosylated (N-linked (GlcNAc...) asparagine; by host).

The protein belongs to the filoviruses glycoprotein family. In terms of assembly, homodimer; disulfide-linked. The homodimers are linked by two disulfide bonds in a parallel orientation. As to quaternary structure, monomer. This precursor is processed into mature sGP and delta-peptide by host furin or furin-like proteases. The cleavage site corresponds to the furin optimal cleavage sequence [KR]-X-[KR]-R. Post-translationally, N-glycosylated. In terms of processing, O-glycosylated.

Its subcellular location is the secreted. In terms of biological role, seems to possess an anti-inflammatory activity as it can reverse the barrier-decreasing effects of TNF alpha. Might therefore contribute to the lack of inflammatory reaction seen during infection in spite the of extensive necrosis and massive virus production. Does not seem to be involved in activation of primary macrophages. Does not seem to interact specifically with neutrophils. Functionally, viroporin that permeabilizes mammalian cell plasma membranes. It acts by altering permeation of ionic compounds and small molecules. This activity may lead to viral enterotoxic activity. This Zaire ebolavirus (strain Gabon-94) (ZEBOV) protein is Pre-small/secreted glycoprotein (GP).